The following is a 528-amino-acid chain: PH domain-containing protein DDB_G0267786 (528 aa).

Residues 59 to 180 (SDVFSGYLVK…WIEIFKTCCR (122 aa)) form the PH domain.

This chain is PH domain-containing protein DDB_G0267786, found in Dictyostelium discoideum (Social amoeba).